A 145-amino-acid polypeptide reads, in one-letter code: FAD synthase (145 aa).

Residues 9-10 (TF), 14-17 (HPGH), Asp-94, and Tyr-122 each bind ATP.

The protein belongs to the archaeal FAD synthase family. Homodimer. The cofactor is a divalent metal cation.

It catalyses the reaction FMN + ATP + H(+) = FAD + diphosphate. It participates in cofactor biosynthesis; FAD biosynthesis; FAD from FMN: step 1/1. Functionally, catalyzes the transfer of the AMP portion of ATP to flavin mononucleotide (FMN) to produce flavin adenine dinucleotide (FAD) coenzyme. The protein is FAD synthase of Methanocaldococcus infernus (strain DSM 11812 / JCM 15783 / ME).